The chain runs to 188 residues: Protein GrpE (188 aa).

Belongs to the GrpE family. In terms of assembly, homodimer.

It localises to the cytoplasm. Participates actively in the response to hyperosmotic and heat shock by preventing the aggregation of stress-denatured proteins, in association with DnaK and GrpE. It is the nucleotide exchange factor for DnaK and may function as a thermosensor. Unfolded proteins bind initially to DnaJ; upon interaction with the DnaJ-bound protein, DnaK hydrolyzes its bound ATP, resulting in the formation of a stable complex. GrpE releases ADP from DnaK; ATP binding to DnaK triggers the release of the substrate protein, thus completing the reaction cycle. Several rounds of ATP-dependent interactions between DnaJ, DnaK and GrpE are required for fully efficient folding. In Chromobacterium violaceum (strain ATCC 12472 / DSM 30191 / JCM 1249 / CCUG 213 / NBRC 12614 / NCIMB 9131 / NCTC 9757 / MK), this protein is Protein GrpE.